The primary structure comprises 319 residues: 1-aminocyclopropane-1-carboxylate oxidase (319 aa).

A Fe2OG dioxygenase domain is found at 153–253 (PTFGTKVSNY…RMSIASFYNP (101 aa)). Fe cation is bound by residues His177, Asp179, and His234.

The protein belongs to the iron/ascorbate-dependent oxidoreductase family. It depends on Fe cation as a cofactor.

The enzyme catalyses 1-aminocyclopropane-1-carboxylate + L-ascorbate + O2 = ethene + L-dehydroascorbate + hydrogen cyanide + CO2 + 2 H2O. It functions in the pathway alkene biosynthesis; ethylene biosynthesis via S-adenosyl-L-methionine; ethylene from S-adenosyl-L-methionine: step 2/2. The protein is 1-aminocyclopropane-1-carboxylate oxidase (ACO1) of Prunus mume (Japanese apricot).